Consider the following 484-residue polypeptide: Aspartyl/glutamyl-tRNA(Asn/Gln) amidotransferase subunit B (484 aa).

It belongs to the GatB/GatE family. GatB subfamily. In terms of assembly, heterotrimer of A, B and C subunits.

It catalyses the reaction L-glutamyl-tRNA(Gln) + L-glutamine + ATP + H2O = L-glutaminyl-tRNA(Gln) + L-glutamate + ADP + phosphate + H(+). The enzyme catalyses L-aspartyl-tRNA(Asn) + L-glutamine + ATP + H2O = L-asparaginyl-tRNA(Asn) + L-glutamate + ADP + phosphate + 2 H(+). In terms of biological role, allows the formation of correctly charged Asn-tRNA(Asn) or Gln-tRNA(Gln) through the transamidation of misacylated Asp-tRNA(Asn) or Glu-tRNA(Gln) in organisms which lack either or both of asparaginyl-tRNA or glutaminyl-tRNA synthetases. The reaction takes place in the presence of glutamine and ATP through an activated phospho-Asp-tRNA(Asn) or phospho-Glu-tRNA(Gln). In Anaeromyxobacter dehalogenans (strain 2CP-1 / ATCC BAA-258), this protein is Aspartyl/glutamyl-tRNA(Asn/Gln) amidotransferase subunit B.